The chain runs to 398 residues: 1-deoxy-D-xylulose 5-phosphate reductoisomerase (398 aa).

The NADPH site is built by Thr10, Gly11, Ser12, Val13, Gly36, Lys37, Asn38, and Asn124. Lys125 serves as a coordination point for 1-deoxy-D-xylulose 5-phosphate. Glu126 lines the NADPH pocket. Position 150 (Asp150) interacts with Mn(2+). The 1-deoxy-D-xylulose 5-phosphate site is built by Ser151, Glu152, Ser186, and His209. Glu152 is a binding site for Mn(2+). Gly215 is a binding site for NADPH. Ser222, Asn227, Lys228, and Glu231 together coordinate 1-deoxy-D-xylulose 5-phosphate. Mn(2+) is bound at residue Glu231.

The protein belongs to the DXR family. In terms of assembly, homodimer. The cofactor is Mg(2+). Mn(2+) is required as a cofactor.

The catalysed reaction is 2-C-methyl-D-erythritol 4-phosphate + NADP(+) = 1-deoxy-D-xylulose 5-phosphate + NADPH + H(+). It participates in isoprenoid biosynthesis; isopentenyl diphosphate biosynthesis via DXP pathway; isopentenyl diphosphate from 1-deoxy-D-xylulose 5-phosphate: step 1/6. Its function is as follows. Catalyzes the NADPH-dependent rearrangement and reduction of 1-deoxy-D-xylulose-5-phosphate (DXP) to 2-C-methyl-D-erythritol 4-phosphate (MEP). The polypeptide is 1-deoxy-D-xylulose 5-phosphate reductoisomerase (Photorhabdus laumondii subsp. laumondii (strain DSM 15139 / CIP 105565 / TT01) (Photorhabdus luminescens subsp. laumondii)).